Consider the following 217-residue polypeptide: CXXC-type zinc finger protein 4 (217 aa).

Positions 1-20 (MHRNDSQRLGKPGGAPESLQ) are disordered. The CXXC-type zinc-finger motif lies at 122–163 (AKKKRKRCGVCVPCKRLINCGVCSSCRNRKTGHQICKFRKCE). Residues C129, C132, C135, C141, C144, C147, C157, and C162 each contribute to the Zn(2+) site.

Its subcellular location is the cytoplasm. Its function is as follows. Acts as a negative regulator of the Wnt signaling pathway required for anterior neural structure formation. Ectopic expression induces ventralization. Binds preferentially to DNA containing cytidine-phosphate-guanosine (CpG) dinucleotides over CpH (H=A, T, and C), hemimethylated-CpG and hemimethylated-hydroxymethyl-CpG. The protein is CXXC-type zinc finger protein 4 (cxxc4) of Xenopus laevis (African clawed frog).